A 125-amino-acid polypeptide reads, in one-letter code: Upsalin (125 aa).

A signal peptide spans 1–16 (MFPTHVLLIVIACVTA).

In terms of processing, weakly glycosylated. In terms of tissue distribution, expressed at highest levels in mantle, followed by adductor muscle. Found in the nacreous shell layer (at protein level).

Its subcellular location is the secreted. This is Upsalin from Unio pictorum (Painter's mussel).